Consider the following 444-residue polypeptide: Endoglucanase N (444 aa).

Positions 1–31 (MWMRRNQIVRKLTLGVVTTVLGMSLSFSALS) are cleaved as a signal peptide. Residues His64, 68–69 (WF), Tyr95, and His130 contribute to the substrate site. Catalysis depends on Glu168, which acts as the Proton donor. Position 230 (Tyr230) interacts with substrate. Glu256 (nucleophile) is an active-site residue. Substrate contacts are provided by residues 262-263 (AS), Trp290, and 295-297 (KSE). The disordered stretch occupies residues 332–358 (ANLGGGDTPTTPTTPTEPTNPGNGTTG). The segment covering 339-358 (TPTTPTTPTEPTNPGNGTTG) has biased composition (low complexity). The CBM3 domain occupies 356 to 444 (TTGDVVLQYR…DKANRYVLVT (89 aa)).

It belongs to the glycosyl hydrolase 5 (cellulase A) family.

Its subcellular location is the secreted. The enzyme catalyses Endohydrolysis of (1-&gt;4)-beta-D-glucosidic linkages in cellulose, lichenin and cereal beta-D-glucans.. The protein is Endoglucanase N (celN) of Pectobacterium atrosepticum (Erwinia carotovora subsp. atroseptica).